The following is a 408-amino-acid chain: Dual-specificity RNA methyltransferase RlmN (408 aa).

Residue glutamate 126 is the Proton acceptor of the active site. Positions 132 to 373 (EEGRGTLCLS…NQAGYASPIR (242 aa)) constitute a Radical SAM core domain. Cysteine 139 and cysteine 384 are disulfide-bonded. Cysteine 146, cysteine 150, and cysteine 153 together coordinate [4Fe-4S] cluster. Residues 210-211 (GE), serine 242, 264-266 (SLH), and asparagine 341 each bind S-adenosyl-L-methionine. The active-site S-methylcysteine intermediate is the cysteine 384.

Belongs to the radical SAM superfamily. RlmN family. [4Fe-4S] cluster serves as cofactor.

The protein resides in the cytoplasm. The enzyme catalyses adenosine(2503) in 23S rRNA + 2 reduced [2Fe-2S]-[ferredoxin] + 2 S-adenosyl-L-methionine = 2-methyladenosine(2503) in 23S rRNA + 5'-deoxyadenosine + L-methionine + 2 oxidized [2Fe-2S]-[ferredoxin] + S-adenosyl-L-homocysteine. It catalyses the reaction adenosine(37) in tRNA + 2 reduced [2Fe-2S]-[ferredoxin] + 2 S-adenosyl-L-methionine = 2-methyladenosine(37) in tRNA + 5'-deoxyadenosine + L-methionine + 2 oxidized [2Fe-2S]-[ferredoxin] + S-adenosyl-L-homocysteine. In terms of biological role, specifically methylates position 2 of adenine 2503 in 23S rRNA and position 2 of adenine 37 in tRNAs. m2A2503 modification seems to play a crucial role in the proofreading step occurring at the peptidyl transferase center and thus would serve to optimize ribosomal fidelity. This chain is Dual-specificity RNA methyltransferase RlmN, found in Bartonella tribocorum (strain CIP 105476 / IBS 506).